The primary structure comprises 428 residues: G2/mitotic-specific cyclin-B (428 aa).

Belongs to the cyclin family. Cyclin AB subfamily. In terms of assembly, interacts with the CDC2 protein kinase to form a serine/threonine kinase holoenzyme complex also known as maturation promoting factor (MPF). The cyclin subunit imparts substrate specificity to the complex.

Its function is as follows. Essential for the control of the cell cycle at the G2/M (mitosis) transition. The sequence is that of G2/mitotic-specific cyclin-B from Spisula solidissima (Atlantic surf-clam).